Reading from the N-terminus, the 276-residue chain is Hydroxycinnamoyl-CoA hydratase-lyase (276 aa).

Lys-29, Ala-68, Met-70, and Leu-72 together coordinate acetyl-CoA. Tyr-75 serves as a coordination point for vanillin. The acetyl-CoA site is built by Gly-120, Ser-142, and Trp-146. Residues Gly-151 and Tyr-239 each coordinate vanillin.

The protein belongs to the enoyl-CoA hydratase/isomerase family. As to quaternary structure, homohexamer; dimer of trimers.

It carries out the reaction (E)-feruloyl-CoA + H2O = vanillin + acetyl-CoA. The enzyme catalyses (E)-caffeoyl-CoA + H2O = 3,4-dihydroxybenzaldehyde + acetyl-CoA. The catalysed reaction is (E)-4-coumaroyl-CoA + H2O = 4-hydroxybenzaldehyde + acetyl-CoA. It catalyses the reaction (E)-feruloyl-CoA + H2O = 3-hydroxy-3-(4-hydroxy-3-methoxyphenyl)propanoyl-CoA. It carries out the reaction 3-hydroxy-3-(4-hydroxy-3-methoxyphenyl)propanoyl-CoA = vanillin + acetyl-CoA. The enzyme catalyses (E)-caffeoyl-CoA + H2O = 3-hydroxy-3-(3,4-dihydroxyphenyl)propanoyl-CoA. The catalysed reaction is 3-hydroxy-3-(3,4-dihydroxyphenyl)propanoyl-CoA = 3,4-dihydroxybenzaldehyde + acetyl-CoA. It catalyses the reaction (E)-4-coumaroyl-CoA + H2O = 3-hydroxy-3-(4-hydroxyphenyl)propanoyl-CoA. It carries out the reaction 3-hydroxy-3-(4-hydroxyphenyl)propanoyl-CoA = 4-hydroxybenzaldehyde + acetyl-CoA. Catalyzes the hydration of the acyl-CoA thioester of ferulic acid and the subsequent retro-aldol cleavage of the hydrated intermediate to yield vanillin (4-hydroxy-3-methoxy-benzaldehyde). The enzyme is also active with caffeoyl-CoA and 4-coumaroyl-CoA producing 3,4-dihydroxybenzaldehyde and 4-hydroxybenzaldehyde, respectively. In Pseudomonas fluorescens, this protein is Hydroxycinnamoyl-CoA hydratase-lyase.